The primary structure comprises 563 residues: Tripeptidyl-peptidase 1 (563 aa).

An N-terminal signal peptide occupies residues 1–19 (MGLQACLLGLFALILSGKC). A propeptide spans 20–195 (SYSPEPDQRR…PEPQVTGTVG (176 aa)) (removed in mature form). Cysteines 111 and 122 form a disulfide. In terms of domain architecture, Peptidase S53 spans 199–563 (GVTPSVIRKR…PALLKTLLNP (365 aa)). Asn-210 and Asn-222 each carry an N-linked (GlcNAc...) asparagine glycan. Active-site charge relay system residues include Glu-272 and Asp-276. 3 N-linked (GlcNAc...) asparagine glycosylation sites follow: Asn-286, Asn-313, and Asn-443. Disulfide bonds link Cys-365–Cys-526 and Cys-522–Cys-537. The Charge relay system role is filled by Ser-475. The Ca(2+) site is built by Asp-517 and Val-518. The Ca(2+) site is built by Gly-539, Gly-541, and Asp-543.

As to quaternary structure, monomer. Interacts with CLN5. Interacts with CLN3. Ca(2+) is required as a cofactor. In terms of processing, activated by autocatalytic proteolytical processing upon acidification. N-glycosylation is required for processing and activity.

The protein localises to the lysosome. It is found in the melanosome. The enzyme catalyses Release of an N-terminal tripeptide from a polypeptide, but also has endopeptidase activity.. Its function is as follows. Lysosomal serine protease with tripeptidyl-peptidase I activity. May act as a non-specific lysosomal peptidase which generates tripeptides from the breakdown products produced by lysosomal proteinases. Requires substrates with an unsubstituted N-terminus. The polypeptide is Tripeptidyl-peptidase 1 (TPP1) (Pan troglodytes (Chimpanzee)).